The chain runs to 439 residues: Ornithine aminotransferase, mitochondrial (439 aa).

Residues 1–25 constitute a mitochondrion transit peptide; sequence MLSKLARLQTVAGLGLGVHSSVASA. N6-acetyllysine occurs at positions 49 and 66. An N6-succinyllysine modification is found at lysine 102. Lysine 107 is modified (N6-acetyllysine; alternate). Lysine 107 bears the N6-succinyllysine; alternate mark. Lysine 292 is subject to N6-(pyridoxal phosphate)lysine. At lysine 362 the chain carries N6-acetyllysine; alternate. Lysine 362 is subject to N6-succinyllysine; alternate. Lysine 386 and lysine 392 each carry N6-acetyllysine. Lysine 405 is modified (N6-acetyllysine; alternate). Lysine 405 is subject to N6-succinyllysine; alternate. Lysine 421 bears the N6-acetyllysine mark.

This sequence belongs to the class-III pyridoxal-phosphate-dependent aminotransferase family. Homohexamer. The cofactor is pyridoxal 5'-phosphate.

Its subcellular location is the mitochondrion matrix. The catalysed reaction is L-ornithine + 2-oxoglutarate = L-glutamate 5-semialdehyde + L-glutamate. Its pathway is amino-acid biosynthesis; L-proline biosynthesis; L-glutamate 5-semialdehyde from L-ornithine: step 1/1. Its function is as follows. Catalyzes the reversible interconversion of L-ornithine and 2-oxoglutarate to L-glutamate semialdehyde and L-glutamate. In Bos taurus (Bovine), this protein is Ornithine aminotransferase, mitochondrial (OAT).